The sequence spans 529 residues: Phosphoenolpyruvate carboxykinase (ATP) (529 aa).

Arg52 contacts substrate. Arg130, Asn131, and Phe133 together coordinate Ca(2+). 2 residues coordinate substrate: Tyr191 and Lys197. ATP is bound by residues Lys197, His216, and 232–240; that span reads GLSGTGKTT. Mn(2+) contacts are provided by Lys197 and His216. Mn(2+) is bound at residue Asp253. Residue Gly267 coordinates Ca(2+). ATP-binding positions include Glu281, Arg319, 438-439, Phe439, and Thr444; that span reads RF. Arg319 provides a ligand contact to substrate.

It belongs to the phosphoenolpyruvate carboxykinase (ATP) family. As to quaternary structure, dimer of dimers. It depends on Mn(2+) as a cofactor.

The protein resides in the cytoplasm. The catalysed reaction is oxaloacetate + ATP = phosphoenolpyruvate + ADP + CO2. It functions in the pathway carbohydrate biosynthesis; gluconeogenesis. Its activity is regulated as follows. Allosterically activated by calcium. Involved in gluconeogenesis. Catalyzes the conversion of oxaloacetate (OAA) to phosphoenolpyruvate (PEP) through direct phosphoryl transfer between the nucleoside triphosphate and OAA. In Thermus thermophilus (strain ATCC 27634 / DSM 579 / HB8), this protein is Phosphoenolpyruvate carboxykinase (ATP).